A 462-amino-acid polypeptide reads, in one-letter code: Dipeptidyl peptidase 1 (462 aa).

An N-terminal signal peptide occupies residues 1–24 (MGPWTHSLRAVLLLVLLGVCTVRS). Residues N29 and N53 are each glycosylated (N-linked (GlcNAc...) asparagine). Cystine bridges form between C30–C118, C54–C136, C254–C297, C290–C330, and C320–C336. Positions 135-230 (ACFVGKKVES…DEIQQQILNL (96 aa)) are excised as a propeptide. Residue C257 is part of the active site. An N-linked (GlcNAc...) asparagine glycan is attached at N275. Chloride-binding residues include F301 and Y303. Y346 serves as a coordination point for chloride. Active-site residues include H404 and N426.

Belongs to the peptidase C1 family. Tetramer of heterotrimers consisting of exclusion domain, heavy- and light chains. It depends on chloride as a cofactor. Broadly distributed, but higher levels found in lung, liver, kidney and spleen. Lower levels found in testis and brain.

It localises to the lysosome. The catalysed reaction is Release of an N-terminal dipeptide, Xaa-Yaa-|-Zaa-, except when Xaa is Arg or Lys, or Yaa or Zaa is Pro.. Functionally, thiol protease. Has dipeptidylpeptidase activity. Active against a broad range of dipeptide substrates composed of both polar and hydrophobic amino acids. Proline cannot occupy the P1 position and arginine cannot occupy the P2 position of the substrate. Can act as both an exopeptidase and endopeptidase. Activates serine proteases such as elastase, cathepsin G and granzymes A and B. The protein is Dipeptidyl peptidase 1 (Ctsc) of Mus musculus (Mouse).